Consider the following 643-residue polypeptide: DNA gyrase subunit B (643 aa).

Residues serine 428 to proline 542 enclose the Toprim domain. Positions 434, 507, and 509 each coordinate Mg(2+).

This sequence belongs to the type II topoisomerase GyrB family. In terms of assembly, heterotetramer, composed of two GyrA and two GyrB chains. In the heterotetramer, GyrA contains the active site tyrosine that forms a transient covalent intermediate with DNA, while GyrB binds cofactors and catalyzes ATP hydrolysis. Requires Mg(2+) as cofactor. The cofactor is Mn(2+). Ca(2+) is required as a cofactor.

Its subcellular location is the cytoplasm. It carries out the reaction ATP-dependent breakage, passage and rejoining of double-stranded DNA.. Functionally, a type II topoisomerase that negatively supercoils closed circular double-stranded (ds) DNA in an ATP-dependent manner to modulate DNA topology and maintain chromosomes in an underwound state. Negative supercoiling favors strand separation, and DNA replication, transcription, recombination and repair, all of which involve strand separation. Also able to catalyze the interconversion of other topological isomers of dsDNA rings, including catenanes and knotted rings. Type II topoisomerases break and join 2 DNA strands simultaneously in an ATP-dependent manner. The chain is DNA gyrase subunit B from Staphylococcus epidermidis (strain ATCC 35984 / DSM 28319 / BCRC 17069 / CCUG 31568 / BM 3577 / RP62A).